Consider the following 368-residue polypeptide: 3-dehydroquinate synthase (368 aa).

Residues 80 to 85, 114 to 118, 138 to 139, K151, and K160 each bind NAD(+); these read DAESAK, GAATD, and TT. Positions 193, 255, and 271 each coordinate Zn(2+).

It belongs to the sugar phosphate cyclases superfamily. Dehydroquinate synthase family. Co(2+) is required as a cofactor. Zn(2+) serves as cofactor. The cofactor is NAD(+).

It is found in the cytoplasm. The catalysed reaction is 7-phospho-2-dehydro-3-deoxy-D-arabino-heptonate = 3-dehydroquinate + phosphate. Its pathway is metabolic intermediate biosynthesis; chorismate biosynthesis; chorismate from D-erythrose 4-phosphate and phosphoenolpyruvate: step 2/7. Its function is as follows. Catalyzes the conversion of 3-deoxy-D-arabino-heptulosonate 7-phosphate (DAHP) to dehydroquinate (DHQ). The polypeptide is 3-dehydroquinate synthase (Corynebacterium jeikeium (strain K411)).